The primary structure comprises 130 residues: ESAT-6 secretion system extracellular protein C (130 aa).

This sequence belongs to the EsxC family.

The protein localises to the secreted. This Staphylococcus aureus (strain MSSA476) protein is ESAT-6 secretion system extracellular protein C.